Here is a 139-residue protein sequence, read N- to C-terminus: ATP synthase epsilon chain (139 aa).

It belongs to the ATPase epsilon chain family. As to quaternary structure, F-type ATPases have 2 components, CF(1) - the catalytic core - and CF(0) - the membrane proton channel. CF(1) has five subunits: alpha(3), beta(3), gamma(1), delta(1), epsilon(1). CF(0) has three main subunits: a, b and c.

The protein resides in the cell membrane. Produces ATP from ADP in the presence of a proton gradient across the membrane. This Enterococcus faecalis (strain ATCC 700802 / V583) protein is ATP synthase epsilon chain.